A 315-amino-acid chain; its full sequence is MSHLVKWNGRGEVVIEQICLDSVRIKEKMKEIVDENILNEDLKVKLISFIKEKKQFSFAELAYYHYIAFDGKNDKAIELLASGIELLILSADIFDDIEDKDNLQASWMKLDPSIATNAATALYTLSLQVIGSVSNHPKLLSLTLQYSLQSLQGQHVDLNLTASSESEYIEMIKLKSGSLVTLPSILGVYLATGEYNETVEEYSRYLGIVEQIANDHYGLYYPNYNDFKTRHTLAFNYLKNKFNQSSIDLLNFYAQENHMINNLEDLKGKLRESGVIQYLNVIKNLAVENFKESFKKLRLDEQRKNKLLIQLLRGI.

Residues D95 and D99 each contribute to the Mg(2+) site.

This sequence belongs to the FPP/GGPP synthase family. Mg(2+) serves as cofactor.

It localises to the cell membrane. The enzyme catalyses L-tryptophyl-[protein] + (2E,6E)-farnesyl diphosphate = (2S,3R)-3-farnesyl-2,3-dihydro-2,N(alpha)-cyclo-L-tryptophyl-[protein] + diphosphate. In terms of biological role, part of a major quorum-sensing system that regulates the development of genetic competence. Involved in the maturation of the competence pheromone ComX. Acts by catalyzing the transfer of a farnesyl group on the ComX pheromone. In vitro, can also catalyze the farnesylation of single tryptophan and tryptophan derivatives. This Bacillus subtilis subsp. natto (strain BEST195) protein is Tryptophan prenyltransferase ComQ.